Here is a 337-residue protein sequence, read N- to C-terminus: tRNA N6-adenosine threonylcarbamoyltransferase (337 aa).

Positions 114 and 118 each coordinate Fe cation. Substrate is bound by residues 136 to 140, D169, G182, D186, and N275; that span reads LVSGG. Residue D301 participates in Fe cation binding.

The protein belongs to the KAE1 / TsaD family. Fe(2+) is required as a cofactor.

The protein localises to the cytoplasm. The catalysed reaction is L-threonylcarbamoyladenylate + adenosine(37) in tRNA = N(6)-L-threonylcarbamoyladenosine(37) in tRNA + AMP + H(+). Required for the formation of a threonylcarbamoyl group on adenosine at position 37 (t(6)A37) in tRNAs that read codons beginning with adenine. Is involved in the transfer of the threonylcarbamoyl moiety of threonylcarbamoyl-AMP (TC-AMP) to the N6 group of A37, together with TsaE and TsaB. TsaD likely plays a direct catalytic role in this reaction. In Streptococcus thermophilus (strain CNRZ 1066), this protein is tRNA N6-adenosine threonylcarbamoyltransferase.